Here is a 155-residue protein sequence, read N- to C-terminus: Small ribosomal subunit protein uS7 (155 aa).

This sequence belongs to the universal ribosomal protein uS7 family. Part of the 30S ribosomal subunit. Contacts proteins S9 and S11.

One of the primary rRNA binding proteins, it binds directly to 16S rRNA where it nucleates assembly of the head domain of the 30S subunit. Is located at the subunit interface close to the decoding center, probably blocks exit of the E-site tRNA. In Helicobacter hepaticus (strain ATCC 51449 / 3B1), this protein is Small ribosomal subunit protein uS7.